Here is a 511-residue protein sequence, read N- to C-terminus: Exodeoxyribonuclease 7 large subunit (511 aa).

Belongs to the XseA family. In terms of assembly, heterooligomer composed of large and small subunits.

It localises to the cytoplasm. It catalyses the reaction Exonucleolytic cleavage in either 5'- to 3'- or 3'- to 5'-direction to yield nucleoside 5'-phosphates.. Functionally, bidirectionally degrades single-stranded DNA into large acid-insoluble oligonucleotides, which are then degraded further into small acid-soluble oligonucleotides. The sequence is that of Exodeoxyribonuclease 7 large subunit from Brucella suis (strain ATCC 23445 / NCTC 10510).